The sequence spans 283 residues: Formamidopyrimidine-DNA glycosylase (283 aa).

The active-site Schiff-base intermediate with DNA is the Pro-2. Glu-3 (proton donor) is an active-site residue. Lys-58 acts as the Proton donor; for beta-elimination activity in catalysis. The DNA site is built by His-100, Arg-119, and Arg-162. An FPG-type zinc finger spans residues 247–283 (RVYGREGLPCVTPGCSGTVGRIVQSGRSSFHCPLCQR). The active-site Proton donor; for delta-elimination activity is Arg-273.

This sequence belongs to the FPG family. Monomer. Zn(2+) is required as a cofactor.

It catalyses the reaction Hydrolysis of DNA containing ring-opened 7-methylguanine residues, releasing 2,6-diamino-4-hydroxy-5-(N-methyl)formamidopyrimidine.. It carries out the reaction 2'-deoxyribonucleotide-(2'-deoxyribose 5'-phosphate)-2'-deoxyribonucleotide-DNA = a 3'-end 2'-deoxyribonucleotide-(2,3-dehydro-2,3-deoxyribose 5'-phosphate)-DNA + a 5'-end 5'-phospho-2'-deoxyribonucleoside-DNA + H(+). Involved in base excision repair of DNA damaged by oxidation or by mutagenic agents. Acts as a DNA glycosylase that recognizes and removes damaged bases. Has a preference for oxidized purines, such as 7,8-dihydro-8-oxoguanine (8-oxoG). Has AP (apurinic/apyrimidinic) lyase activity and introduces nicks in the DNA strand. Cleaves the DNA backbone by beta-delta elimination to generate a single-strand break at the site of the removed base with both 3'- and 5'-phosphates. The sequence is that of Formamidopyrimidine-DNA glycosylase from Cereibacter sphaeroides (strain KD131 / KCTC 12085) (Rhodobacter sphaeroides).